Reading from the N-terminus, the 448-residue chain is Inositol polyphosphate 5-phosphatase K (448 aa).

The segment at 16-318 (IHVVTWNVAS…SDHKPVSGTF (303 aa)) is catalytic. The interval 318–448 (FDLELKPLVS…DPLGEAQPQI (131 aa)) is required for interaction with GPR78 and PAK1. The required for ruffle localization stretch occupies residues 321-448 (ELKPLVSAPL…DPLGEAQPQI (128 aa)).

The protein belongs to the inositol 1,4,5-trisphosphate 5-phosphatase type II family. As to quaternary structure, interacts with GPR78; necessary for INPP5K localization at the endoplasmic reticulum. Interacts with PAK1; competes with GPR78. Ubiquitously expressed with highest levels in skeletal muscle, heart and kidney.

It is found in the endoplasmic reticulum. The protein resides in the cytoplasm. The catalysed reaction is 1D-myo-inositol 1,4,5-trisphosphate + H2O = 1D-myo-inositol 1,4-bisphosphate + phosphate. The enzyme catalyses 1D-myo-inositol 1,3,4,5-tetrakisphosphate + H2O = 1D-myo-inositol 1,3,4-trisphosphate + phosphate. It catalyses the reaction a 1,2-diacyl-sn-glycero-3-phospho-(1D-myo-inositol-4,5-bisphosphate) + H2O = a 1,2-diacyl-sn-glycero-3-phospho-(1D-myo-inositol 4-phosphate) + phosphate. It carries out the reaction a 1,2-diacyl-sn-glycero-3-phospho-(1D-myo-inositol-3,4,5-trisphosphate) + H2O = a 1,2-diacyl-sn-glycero-3-phospho-(1D-myo-inositol-3,4-bisphosphate) + phosphate. The catalysed reaction is 1,2-dioctanoyl-sn-glycero-3-phospho-(1D-myo-inositol-3,4,5-trisphosphate) + H2O = 1,2-dioctanoyl-sn-glycero-3-phospho-(1D-myo-inositol-3,4-bisphosphate) + phosphate. In terms of biological role, inositol 5-phosphatase which acts on inositol 1,4,5-trisphosphate, inositol 1,3,4,5-tetrakisphosphate, phosphatidylinositol 4,5-bisphosphate and phosphatidylinositol 3,4,5-trisphosphate. Has 6-fold higher affinity for phosphatidylinositol 4,5-bisphosphate than for inositol 1,4,5-trisphosphate. Negatively regulates assembly of the actin cytoskeleton. Controls insulin-dependent glucose uptake among inositol 3,4,5-trisphosphate phosphatases; therefore, is the specific regulator for insulin signaling in skeletal muscle. The sequence is that of Inositol polyphosphate 5-phosphatase K from Homo sapiens (Human).